Here is a 415-residue protein sequence, read N- to C-terminus: Histidine--tRNA ligase (415 aa).

Belongs to the class-II aminoacyl-tRNA synthetase family. Homodimer.

It is found in the cytoplasm. The catalysed reaction is tRNA(His) + L-histidine + ATP = L-histidyl-tRNA(His) + AMP + diphosphate + H(+). The protein is Histidine--tRNA ligase of Clostridium botulinum (strain Langeland / NCTC 10281 / Type F).